We begin with the raw amino-acid sequence, 515 residues long: Putative ribose/galactose/methyl galactoside import ATP-binding protein (515 aa).

2 ABC transporter domains span residues 26 to 262 (LEVA…VGRE) and 272 to 511 (VALG…KIMD). Residue 58-65 (GENGAGKS) coordinates ATP.

Belongs to the ABC transporter superfamily. Carbohydrate importer 2 (CUT2) (TC 3.A.1.2) family.

The protein localises to the cell inner membrane. The enzyme catalyses D-ribose(out) + ATP + H2O = D-ribose(in) + ADP + phosphate + H(+). It carries out the reaction D-galactose(out) + ATP + H2O = D-galactose(in) + ADP + phosphate + H(+). Functionally, part of an ABC transporter complex involved in carbohydrate import. Could be involved in ribose, galactose and/or methyl galactoside import. Responsible for energy coupling to the transport system. The chain is Putative ribose/galactose/methyl galactoside import ATP-binding protein from Hahella chejuensis (strain KCTC 2396).